A 999-amino-acid polypeptide reads, in one-letter code: Translation initiation factor IF-2 (999 aa).

The disordered stretch occupies residues 50–407; that stretch reads AFVNNTGSPA…RGQGQTVRLS (358 aa). Composition is skewed to pro residues over residues 60–89 and 96–121; these read PAAP…PPGG and PMPP…PPQS. The segment covering 136-162 has biased composition (low complexity); it reads VAAAEARAAALKAEQEAAVKAAQAARQ. The span at 163 to 173 shows a compositional bias: basic and acidic residues; that stretch reads QQRDNVRREPP. Residues 179–194 are compositionally biased toward pro residues; the sequence is RPGPRPGPGAMPPRPG. Low complexity predominate over residues 213-222; the sequence is GGRPPARGAG. A compositionally biased stretch (pro residues) spans 244–266; it reads RPSPASMPPRPSPASMPPRPSPA. The segment covering 275 to 367 has biased composition (gly residues); it reads RPGGPGSGRP…GAAGAFGRPG (93 aa). The span at 371–380 shows a compositional bias: basic residues; the sequence is TRGRKSKKQR. A compositionally biased stretch (polar residues) spans 388–405; the sequence is SAPTMSSGAPRGQGQTVR. One can recognise a tr-type G domain in the interval 490–662; sequence SRPPVVTVMG…VLLTADASLE (173 aa). The segment at 499–506 is G1; it reads GHVDHGKT. 499–506 contributes to the GTP binding site; that stretch reads GHVDHGKT. The G2 stretch occupies residues 524 to 528; sequence GITQH. The G3 stretch occupies residues 549-552; it reads DTPG. Residues 549–553 and 603–606 contribute to the GTP site; these read DTPGH and NKID. The interval 603–606 is G4; it reads NKID. Residues 639–641 are G5; that stretch reads AAK.

It belongs to the TRAFAC class translation factor GTPase superfamily. Classic translation factor GTPase family. IF-2 subfamily.

Its subcellular location is the cytoplasm. Its function is as follows. One of the essential components for the initiation of protein synthesis. Protects formylmethionyl-tRNA from spontaneous hydrolysis and promotes its binding to the 30S ribosomal subunits. Also involved in the hydrolysis of GTP during the formation of the 70S ribosomal complex. The polypeptide is Translation initiation factor IF-2 (Salinispora tropica (strain ATCC BAA-916 / DSM 44818 / JCM 13857 / NBRC 105044 / CNB-440)).